The chain runs to 356 residues: DNA polymerase IV (356 aa).

A UmuC domain is found at 6 to 187; the sequence is IIHIDMDAFY…QPIRRLHGVG (182 aa). Mg(2+) contacts are provided by aspartate 10 and aspartate 105. Glutamate 106 is an active-site residue.

Belongs to the DNA polymerase type-Y family. In terms of assembly, monomer. It depends on Mg(2+) as a cofactor.

Its subcellular location is the cytoplasm. It catalyses the reaction DNA(n) + a 2'-deoxyribonucleoside 5'-triphosphate = DNA(n+1) + diphosphate. Functionally, poorly processive, error-prone DNA polymerase involved in untargeted mutagenesis. Copies undamaged DNA at stalled replication forks, which arise in vivo from mismatched or misaligned primer ends. These misaligned primers can be extended by PolIV. Exhibits no 3'-5' exonuclease (proofreading) activity. May be involved in translesional synthesis, in conjunction with the beta clamp from PolIII. In Halorhodospira halophila (strain DSM 244 / SL1) (Ectothiorhodospira halophila (strain DSM 244 / SL1)), this protein is DNA polymerase IV.